The primary structure comprises 269 residues: Shikimate dehydrogenase (NADP(+)) (269 aa).

Shikimate contacts are provided by residues 17–19 and T64; that span reads SKS. K68 serves as the catalytic Proton acceptor. E80 is an NADP(+) binding site. Shikimate contacts are provided by N89 and D105. NADP(+) is bound by residues 130–134, 154–159, and M213; these read GAGGA and NRTHTK. Residue Y215 participates in shikimate binding. Position 237 (G237) interacts with NADP(+).

It belongs to the shikimate dehydrogenase family. Homodimer.

The enzyme catalyses shikimate + NADP(+) = 3-dehydroshikimate + NADPH + H(+). Its pathway is metabolic intermediate biosynthesis; chorismate biosynthesis; chorismate from D-erythrose 4-phosphate and phosphoenolpyruvate: step 4/7. Involved in the biosynthesis of the chorismate, which leads to the biosynthesis of aromatic amino acids. Catalyzes the reversible NADPH linked reduction of 3-dehydroshikimate (DHSA) to yield shikimate (SA). The chain is Shikimate dehydrogenase (NADP(+)) from Neisseria mucosa.